The following is a 301-amino-acid chain: MTLSRDDAAQVAKVLSEALPYIRRFVGKTLVIKYGGNAMESEELKAGFARDVVLMKAVGINPVVVHGGGPQIGDLLKRLSIESHFIDGMRVTDAATMDVVEMVLGGQVNKDIVNLINRHGGSAIGLTGKDAELIRAKKLTVTRQTPEMTKPEIIDIGHVGEVTGVNVELLNMLVKGDFIPVIAPIGVGSNGESYNINADLVAGKVAEALKAEKLMLLTNIAGLMDKQGQVLTGLSTEQVNELIADGTIYGGMLPKIRCALEAVQGGVTSAHIIDGRVPNAVLLEIFTDSGVGTLISNRKRH.

Residues 68–69 (GG), Arg-90, and Asn-195 contribute to the substrate site.

This sequence belongs to the acetylglutamate kinase family. ArgB subfamily.

It localises to the cytoplasm. It carries out the reaction N-acetyl-L-glutamate + ATP = N-acetyl-L-glutamyl 5-phosphate + ADP. It participates in amino-acid biosynthesis; L-arginine biosynthesis; N(2)-acetyl-L-ornithine from L-glutamate: step 2/4. Its function is as follows. Catalyzes the ATP-dependent phosphorylation of N-acetyl-L-glutamate. This is Acetylglutamate kinase from Pseudomonas paraeruginosa (strain DSM 24068 / PA7) (Pseudomonas aeruginosa (strain PA7)).